A 102-amino-acid polypeptide reads, in one-letter code: Small ribosomal subunit protein uS10 (102 aa).

This sequence belongs to the universal ribosomal protein uS10 family. As to quaternary structure, part of the 30S ribosomal subunit.

Involved in the binding of tRNA to the ribosomes. This Dehalococcoides mccartyi (strain ATCC BAA-2100 / JCM 16839 / KCTC 5957 / BAV1) protein is Small ribosomal subunit protein uS10.